Reading from the N-terminus, the 303-residue chain is Acetylglutamate kinase (303 aa).

Substrate is bound by residues 75-76 (GG), arginine 97, and asparagine 194.

It belongs to the acetylglutamate kinase family. ArgB subfamily.

It localises to the cytoplasm. It carries out the reaction N-acetyl-L-glutamate + ATP = N-acetyl-L-glutamyl 5-phosphate + ADP. It functions in the pathway amino-acid biosynthesis; L-arginine biosynthesis; N(2)-acetyl-L-ornithine from L-glutamate: step 2/4. Functionally, catalyzes the ATP-dependent phosphorylation of N-acetyl-L-glutamate. This is Acetylglutamate kinase from Gloeobacter violaceus (strain ATCC 29082 / PCC 7421).